A 203-amino-acid chain; its full sequence is Endo-type membrane-bound lytic murein transglycosylase A (203 aa).

The signal sequence occupies residues 1–15 (MKLRWFAFLIVLLAG). Residue Cys16 is the site of N-palmitoyl cysteine attachment. Cys16 is lipidated: S-diacylglycerol cysteine.

This sequence belongs to the transglycosylase Slt family.

The protein localises to the cell outer membrane. It carries out the reaction Endolytic cleavage of the (1-&gt;4)-beta-glycosidic linkage between N-acetylmuramic acid (MurNAc) and N-acetylglucosamine (GlcNAc) residues in peptidoglycan with concomitant formation of a 1,6-anhydrobond in the MurNAc residue.. Its function is as follows. Murein-degrading enzyme. May play a role in recycling of muropeptides during cell elongation and/or cell division. Preferentially cleaves at a distance of more than two disaccharide units from the ends of the glycan chain. In Escherichia coli O1:K1 / APEC, this protein is Endo-type membrane-bound lytic murein transglycosylase A.